We begin with the raw amino-acid sequence, 235 residues long: Lipoprotein signal peptidase (235 aa).

Positions 1–23 (MTDETSGPAEPVTDAPGDAESPA) are disordered. 3 helical membrane-spanning segments follow: residues 31-51 (LLLTVAAVVLFLDVVTKVLAV), 84-104 (GYTWVLTLVATGVVIGIIWMG), and 108-128 (VSPWWALGLGLILGGATGNLV). Active-site residues include aspartate 144 and aspartate 158. A helical membrane pass occupies residues 156–176 (VADPSVVGGAILLVALSLFGF). The disordered stretch occupies residues 185 to 235 (RPGEDAEPSAGASDSTPEAPAADGPDKPAGPVGPEDAAEESKTVGHQAEPS). A compositionally biased stretch (low complexity) spans 201–218 (PEAPAADGPDKPAGPVGP).

It belongs to the peptidase A8 family.

The protein resides in the cell membrane. The enzyme catalyses Release of signal peptides from bacterial membrane prolipoproteins. Hydrolyzes -Xaa-Yaa-Zaa-|-(S,diacylglyceryl)Cys-, in which Xaa is hydrophobic (preferably Leu), and Yaa (Ala or Ser) and Zaa (Gly or Ala) have small, neutral side chains.. Its pathway is protein modification; lipoprotein biosynthesis (signal peptide cleavage). Its function is as follows. This protein specifically catalyzes the removal of signal peptides from prolipoproteins. The sequence is that of Lipoprotein signal peptidase from Mycolicibacterium smegmatis (strain ATCC 700084 / mc(2)155) (Mycobacterium smegmatis).